Here is a 286-residue protein sequence, read N- to C-terminus: Phosphatidylserine decarboxylase proenzyme (286 aa).

Residues D88, H145, and S251 each act as charge relay system; for autoendoproteolytic cleavage activity in the active site. The active-site Schiff-base intermediate with substrate; via pyruvic acid; for decarboxylase activity is S251. Residue S251 is modified to Pyruvic acid (Ser); by autocatalysis.

This sequence belongs to the phosphatidylserine decarboxylase family. PSD-B subfamily. Prokaryotic type I sub-subfamily. As to quaternary structure, heterodimer of a large membrane-associated beta subunit and a small pyruvoyl-containing alpha subunit. Requires pyruvate as cofactor. Post-translationally, is synthesized initially as an inactive proenzyme. Formation of the active enzyme involves a self-maturation process in which the active site pyruvoyl group is generated from an internal serine residue via an autocatalytic post-translational modification. Two non-identical subunits are generated from the proenzyme in this reaction, and the pyruvate is formed at the N-terminus of the alpha chain, which is derived from the carboxyl end of the proenzyme. The autoendoproteolytic cleavage occurs by a canonical serine protease mechanism, in which the side chain hydroxyl group of the serine supplies its oxygen atom to form the C-terminus of the beta chain, while the remainder of the serine residue undergoes an oxidative deamination to produce ammonia and the pyruvoyl prosthetic group on the alpha chain. During this reaction, the Ser that is part of the protease active site of the proenzyme becomes the pyruvoyl prosthetic group, which constitutes an essential element of the active site of the mature decarboxylase.

The protein localises to the cell membrane. The enzyme catalyses a 1,2-diacyl-sn-glycero-3-phospho-L-serine + H(+) = a 1,2-diacyl-sn-glycero-3-phosphoethanolamine + CO2. It functions in the pathway phospholipid metabolism; phosphatidylethanolamine biosynthesis; phosphatidylethanolamine from CDP-diacylglycerol: step 2/2. Its function is as follows. Catalyzes the formation of phosphatidylethanolamine (PtdEtn) from phosphatidylserine (PtdSer). In Verminephrobacter eiseniae (strain EF01-2), this protein is Phosphatidylserine decarboxylase proenzyme.